We begin with the raw amino-acid sequence, 640 residues long: Chaperone protein DnaK (640 aa).

Threonine 199 is modified (phosphothreonine; by autocatalysis). Low complexity predominate over residues 606–621 (QQAAGAGAQQADGTGK). Positions 606–640 (QQAAGAGAQQADGTGKAADDGVVDAEFEEVKEDNK) are disordered. Acidic residues predominate over residues 626–640 (GVVDAEFEEVKEDNK).

The protein belongs to the heat shock protein 70 family.

Functionally, acts as a chaperone. The sequence is that of Chaperone protein DnaK from Cellvibrio japonicus (strain Ueda107) (Pseudomonas fluorescens subsp. cellulosa).